We begin with the raw amino-acid sequence, 117 residues long: Large ribosomal subunit protein bL20 (117 aa).

It belongs to the bacterial ribosomal protein bL20 family.

Functionally, binds directly to 23S ribosomal RNA and is necessary for the in vitro assembly process of the 50S ribosomal subunit. It is not involved in the protein synthesizing functions of that subunit. The chain is Large ribosomal subunit protein bL20 from Roseiflexus sp. (strain RS-1).